Here is a 325-residue protein sequence, read N- to C-terminus: Mitochondrial thiamine pyrophosphate carrier 1 (325 aa).

Solcar repeat units lie at residues 12-111 (GSRL…TTLL), 122-209 (PPSA…LRPH), and 216-312 (PFSS…ALKF). The next 6 helical transmembrane spans lie at 17–35 (VTAA…IAPL), 92–108 (LLYV…YRTT), 127–143 (SFVA…AATY), 184–200 (VWDR…SFFF), 223–239 (VART…TFPL), and 287–304 (GLTV…VTMW).

The protein belongs to the mitochondrial carrier (TC 2.A.29) family.

The protein resides in the mitochondrion inner membrane. Functionally, mitochondrial transporter that mediates uptake of thiamine pyrophosphate (ThPP) into mitochondria. The protein is Mitochondrial thiamine pyrophosphate carrier 1 (TPC1) of Chaetomium globosum (strain ATCC 6205 / CBS 148.51 / DSM 1962 / NBRC 6347 / NRRL 1970) (Soil fungus).